The primary structure comprises 895 residues: DNA mismatch repair protein MutS (895 aa).

632–639 (GPNMAGKS) serves as a coordination point for ATP. Positions 824-849 (VTQDKKQVKKQTKNNHSARSGSRQQQ) are disordered. Positions 837–849 (NNHSARSGSRQQQ) are enriched in polar residues.

It belongs to the DNA mismatch repair MutS family.

In terms of biological role, this protein is involved in the repair of mismatches in DNA. It is possible that it carries out the mismatch recognition step. This protein has a weak ATPase activity. The chain is DNA mismatch repair protein MutS from Desulforapulum autotrophicum (strain ATCC 43914 / DSM 3382 / VKM B-1955 / HRM2) (Desulfobacterium autotrophicum).